Consider the following 1085-residue polypeptide: Toxin VasX (1085 aa).

The interval 1–20 (MSNPNQAAKTGQTNDAQNPA) is disordered. Helical transmembrane passes span 753–773 (ALGEAIYATGNTIVVAGAISA), 813–833 (IALVATVGMIASALETWESWG), 860–880 (IIFYIQFFTLLGSGIGGPSIA), and 884–904 (AGWMLAGFAVIGIVYLIGVIL).

It localises to the secreted. The protein resides in the host membrane. Functionally, toxin secreted by the type VI (T6SS) secretion system that acts on prokaryotic target cells. Acts in conjunction with VasW, an accessory protein to VasX, to compromise the inner membrane of prokaryotic target cells. The chain is Toxin VasX from Vibrio cholerae serotype O1 (strain ATCC 39315 / El Tor Inaba N16961).